Here is a 372-residue protein sequence, read N- to C-terminus: Cell division protein FtsZ 1 (372 aa).

GTP-binding positions include 51–55 (GAGCN), 138–140 (GTG), Glu-169, Arg-173, and Asp-216. The disordered stretch occupies residues 351–372 (QEETPEPSEEEVPPVKIDIPEL). The segment covering 353–362 (ETPEPSEEEV) has biased composition (acidic residues).

The protein belongs to the FtsZ family. As to quaternary structure, homodimer. Polymerizes to form a dynamic ring structure in a strictly GTP-dependent manner. Interacts directly with several other division proteins.

It localises to the cytoplasm. Essential cell division protein that forms a contractile ring structure (Z ring) at the future cell division site. The regulation of the ring assembly controls the timing and the location of cell division. One of the functions of the FtsZ ring is to recruit other cell division proteins to the septum to produce a new cell wall between the dividing cells. Binds GTP and shows GTPase activity. In Pyrococcus abyssi (strain GE5 / Orsay), this protein is Cell division protein FtsZ 1.